A 476-amino-acid chain; its full sequence is Proline--tRNA ligase 2 (476 aa).

This sequence belongs to the class-II aminoacyl-tRNA synthetase family. ProS type 3 subfamily. In terms of assembly, homodimer.

It is found in the cytoplasm. It catalyses the reaction tRNA(Pro) + L-proline + ATP = L-prolyl-tRNA(Pro) + AMP + diphosphate. In terms of biological role, catalyzes the attachment of proline to tRNA(Pro) in a two-step reaction: proline is first activated by ATP to form Pro-AMP and then transferred to the acceptor end of tRNA(Pro). This is Proline--tRNA ligase 2 from Bacillus cereus (strain ZK / E33L).